A 419-amino-acid chain; its full sequence is MPYDKVIVPRDGAKITVNADLSLNVPNHPIIPFIEGDGIGVDITPVMIKVVDAAVAKAYQGKKSIVWMEVYCGEKASKIYDGEYMPTETLEILREYVISIKGPLTTPVGGGMRSLNVALRQELDLYVCQRPVRWFEGVPSPVHSPELTDMVIFRENSEDIYAGIEWKAGSDDAKKVIKFLKEEMGVTKIRFSDDCGIGIKPVSKEGSQRLVRKAIQHAIDNDLPSVTLVHKGNIMKFTEGAFKEWGYELAAERFGAELLDGGPWMTMKNPKTGNDIIIKDVIADAFLQQILMRPAEYSVVATLNLNGDYISDALAAEVGGIGIAPGANKGGSIAVYEATHGTAPKYAGQDKVNPGSLILSAEMMLRDMGWIEAADLVIAGIKGAIKNKTVTYDFERLMPDAILLSSSEFGKAIIKHMDA.

An NADP(+)-binding site is contributed by Thr-105. Positions 114, 116, 120, 130, and 154 each coordinate D-threo-isocitrate. Asp-308 lines the Mg(2+) pocket. Residues 340–346 (HGTAPKY), Asn-353, Tyr-392, and Arg-396 contribute to the NADP(+) site.

This sequence belongs to the isocitrate and isopropylmalate dehydrogenases family. In terms of assembly, homodimer. It depends on Mg(2+) as a cofactor. Mn(2+) is required as a cofactor.

The catalysed reaction is D-threo-isocitrate + NADP(+) = 2-oxoglutarate + CO2 + NADPH. Its activity is regulated as follows. IDH activity is not significantly affected by monovalent cations. The combined addition of Mn(2+) and another divalent cation results in the decrease of the activity. Catalyzes the oxidative decarboxylation of isocitrate to 2-oxoglutarate and carbon dioxide with the concomitant reduction of NADP(+). Cannot use NAD(+). This is Isocitrate dehydrogenase [NADP] 1 from Psychrobacter sp. (strain 13A).